Consider the following 468-residue polypeptide: 6-phosphogluconate dehydrogenase, decarboxylating (468 aa).

NADP(+) is bound by residues 10–15, 33–35, 74–76, and Asn-102; these read GMAVMG, NRS, and IKS. Substrate contacts are provided by residues Asn-102 and 128–130; that span reads SGG. Residue Lys-182 is the Proton acceptor of the active site. Substrate is bound at residue 185 to 186; it reads HN. Glu-189 (proton donor) is an active-site residue. Substrate is bound by residues Tyr-190, Lys-259, Arg-286, Arg-445, and His-451.

It belongs to the 6-phosphogluconate dehydrogenase family. In terms of assembly, homodimer.

It catalyses the reaction 6-phospho-D-gluconate + NADP(+) = D-ribulose 5-phosphate + CO2 + NADPH. It participates in carbohydrate degradation; pentose phosphate pathway; D-ribulose 5-phosphate from D-glucose 6-phosphate (oxidative stage): step 3/3. Catalyzes the oxidative decarboxylation of 6-phosphogluconate to ribulose 5-phosphate and CO(2), with concomitant reduction of NADP to NADPH. In Buchnera aphidicola subsp. Baizongia pistaciae (strain Bp), this protein is 6-phosphogluconate dehydrogenase, decarboxylating (gnd).